A 64-amino-acid chain; its full sequence is Large ribosomal subunit protein bL35 (64 aa).

Belongs to the bacterial ribosomal protein bL35 family.

This chain is Large ribosomal subunit protein bL35, found in Acidothermus cellulolyticus (strain ATCC 43068 / DSM 8971 / 11B).